A 218-amino-acid polypeptide reads, in one-letter code: Elongation factor Ts (218 aa).

The tract at residues 82–85 is involved in Mg(2+) ion dislocation from EF-Tu; it reads TDFV.

It belongs to the EF-Ts family.

It localises to the cytoplasm. Its function is as follows. Associates with the EF-Tu.GDP complex and induces the exchange of GDP to GTP. It remains bound to the aminoacyl-tRNA.EF-Tu.GTP complex up to the GTP hydrolysis stage on the ribosome. In Prochlorococcus marinus (strain MIT 9211), this protein is Elongation factor Ts.